The chain runs to 476 residues: Stromelysin-2 (476 aa).

The N-terminal stretch at 1-17 is a signal peptide; the sequence is MMHLAFLVLLCLPVCSA. A propeptide spans 18 to 98 (activation peptide); sequence YPLSGAAKEE…PRCGVPDVGH (81 aa). Positions 89 to 96 match the Cysteine switch motif; the sequence is PRCGVPDV. The Zn(2+) site is built by Cys91, His167, Asp169, His182, His195, and His217. Glu218 is a catalytic residue. The Zn(2+) site is built by His221 and His227. 4 Hemopexin repeats span residues 286–335, 336–382, 384–432, and 433–476; these read PAKC…WPSL, PSYL…GFPP, IRKI…FPGV, and EPKV…WLHC. A disulfide bridge connects residues Cys289 and Cys476.

This sequence belongs to the peptidase M10A family. Requires Zn(2+) as cofactor. Ca(2+) serves as cofactor.

It localises to the secreted. Its subcellular location is the extracellular space. It is found in the extracellular matrix. It carries out the reaction Similar to stromelysin 1, but action on collagen types III, IV and V is weak.. In terms of biological role, can degrade fibronectin, gelatins of type I, III, IV, and V; weakly collagens III, IV, and V. Activates procollagenase. This chain is Stromelysin-2 (MMP10), found in Homo sapiens (Human).